Consider the following 393-residue polypeptide: MASLDSLVIFLFSTLFVTIVSSETPCPNFKSIISFGDSIADTGNLVGLSDRNQLPVTAFPPYGETFFHHPTGRSCDGRIIMDFIAEFVGLPYVPPYFGSKNRNFDKGVNFAVAGATALKSSFLKKRGIQPHTNVSLGVQLKSFKKSLPNLCGSPSDCRDMIGNALILMGEIGGNDYNFPFFNRKPVKEVEELVPFVIASISSTITELIGMGGKTFLVPGEFPIGCSVVYLTLYKTSNKDEYDPSTGCLKWLNKFGEYHSEKLKVELNRLRKLYPHVNIIYADYYNSLLRIFKEPAKFGFMERPFPACCGIGGPYNFNFTRKCGSVGVKSCKDPSKYVGWDGVHMTEAAYKWIADGILNGPYANPPFDRSCLRSEIKKESLYNQSTLTQACVKL.

An N-terminal signal peptide occupies residues 1–22; sequence MASLDSLVIFLFSTLFVTIVSS. The Nucleophile role is filled by S38. 2 N-linked (GlcNAc...) asparagine glycosylation sites follow: N133 and N317. Active-site residues include D340 and H343. N382 carries N-linked (GlcNAc...) asparagine glycosylation.

Belongs to the 'GDSL' lipolytic enzyme family.

It localises to the secreted. This is GDSL esterase/lipase At1g28600 from Arabidopsis thaliana (Mouse-ear cress).